A 58-amino-acid chain; its full sequence is Cholecystokinins (58 aa).

Tyrosine 52 is modified (sulfotyrosine). Phenylalanine 58 is modified (phenylalanine amide).

Belongs to the gastrin/cholecystokinin family. As to quaternary structure, binds to CCK-A receptors in the pancreas and CCK-B receptors in the brain. cholecystokinin 8 binds CCK-A receptors more potently than cholecystokinin 58, cholecystokinin 8 and cholecystokinin 58 bind CCK-B receptors with equal affinity. Post-translationally, the precursor is cleaved by proteases to produce a number of active cholecystokinins. In terms of processing, cholecystokinin 58 occurs in both sulfated (CCK58(s)) and nonsulfated (CCK58(ns)) forms, which differ in their receptor-binding activities. CCK58(s) binds to the CCK-A receptor with high affinity, CCK58(ns) binds poorly to the CCK-A receptor. CCK58(s) and CCK58(ns) both bind the CCK-B receptor. The precursor is cleaved by ACE, which removes the Gly-Arg-Arg peptide at the C-terminus, leading to mature hormone.

It is found in the secreted. This peptide hormone induces gall bladder contraction and the release of pancreatic enzymes in the gut. Its function in the brain is not clear. Binding to CCK-A receptors stimulates amylase release from the pancreas, binding to CCK-B receptors stimulates gastric acid secretion. cholecystokinin 58 and cholecystokinin 8, but not cholecystokinin 58 desnonopeptide, stimulate amylase release from the pancreas. cholecystokinin 58, but not cholecystokinin 8, increases bile-pancreatic volume. This Canis lupus familiaris (Dog) protein is Cholecystokinins.